The following is a 233-amino-acid chain: Small ribosomal subunit protein uS3 (233 aa).

Residues 39 to 107 (VRQFLMKTLE…PVQINISEVR (69 aa)) form the KH type-2 domain.

The protein belongs to the universal ribosomal protein uS3 family. As to quaternary structure, part of the 30S ribosomal subunit. Forms a tight complex with proteins S10 and S14.

In terms of biological role, binds the lower part of the 30S subunit head. Binds mRNA in the 70S ribosome, positioning it for translation. The polypeptide is Small ribosomal subunit protein uS3 (Buchnera aphidicola subsp. Acyrthosiphon pisum (strain 5A)).